Here is a 587-residue protein sequence, read N- to C-terminus: MAEYVNYVLGSLYVSDTATSTIPTDVRNFIAPPFPLNFWSGPTFTVRSNTRADPLKLVAARHRAAAAAIDTLEAQSQYGVANVDALIRPLERQVAKVADALAALEDAARAAESADAATPQVNASEADQRPDNIGQSLSEIQIAKNDVPMEFDTNLAVDLLATVFVSRAAGGSNGVVFGTWYRALQDRLVTERPVATRSIDYRDGRMSKTFMTTAVVSLQSCGRLYIGNRPYSAFEAAVLCLHLAHRAVNSNYTYPTSFSGLIEQLPVYIEAFSTALGDGTLGKVGYEFNGARLPKNQFHVPGGGGRYERGALNGHGVLETLIRLKVLPAIPGSLGTTSTAVGPELDADQTAYIDDVNKAAAAFLVRAQNLFLTEDQTLLRSTINTITALLLLRRLLWNGNVYTDRLRNNFQLGAIVPNLAVSQRDARGASGGDAAAMVSRSGNNNFTFLCERYVSPIYIANREVELTQLFPGLAALCLDAQTVARDQPQHRAVNVSTGRNQTNLTRLIGIELENRRRTAPVPINEVLAAHDAVALQYERGLGLLMQKPRLRASLEETRRLGQFNVASDYDLLYFVCLGYIPSLTSAM.

The interaction with major capsid protein/MCP stretch occupies residues 1 to 53 (MAEYVNYVLGSLYVSDTATSTIPTDVRNFIAPPFPLNFWSGPTFTVRSNTRAD). The disordered stretch occupies residues 113–132 (SADAATPQVNASEADQRPDN).

It belongs to the herpesviridae CVC2 protein family. As to quaternary structure, heterodimerizes with CVC1. Interacts with major capsid protein/MCP and triplex capsid protein 1/TRX1 at the pentamer vertices. Interacts with the large tegument protein/LTP.

The protein resides in the virion. Its subcellular location is the host nucleus. Its function is as follows. Capsid vertex-specific component that plays a role during viral DNA encapsidation, assuring correct genome cleavage and presumably stabilizing capsids that contain full-length viral genomes. Participates in the interaction between the capsid and the tegument through interaction with the large tegument protein/LTP. This Equine herpesvirus 1 (strain V592) (EHV-1) protein is Capsid vertex component 2.